We begin with the raw amino-acid sequence, 208 residues long: 3-isopropylmalate dehydratase small subunit 2 (208 aa).

The protein belongs to the LeuD family. LeuD type 1 subfamily. In terms of assembly, heterodimer of LeuC and LeuD.

The enzyme catalyses (2R,3S)-3-isopropylmalate = (2S)-2-isopropylmalate. It functions in the pathway amino-acid biosynthesis; L-leucine biosynthesis; L-leucine from 3-methyl-2-oxobutanoate: step 2/4. Its function is as follows. Catalyzes the isomerization between 2-isopropylmalate and 3-isopropylmalate, via the formation of 2-isopropylmaleate. The chain is 3-isopropylmalate dehydratase small subunit 2 from Salmonella choleraesuis (strain SC-B67).